Here is a 250-residue protein sequence, read N- to C-terminus: Probable transcriptional regulatory protein PERMA_0079 (250 aa).

It belongs to the TACO1 family.

It is found in the cytoplasm. This chain is Probable transcriptional regulatory protein PERMA_0079, found in Persephonella marina (strain DSM 14350 / EX-H1).